Reading from the N-terminus, the 72-residue chain is Conotoxin Gla(2)-TxVI/B (72 aa).

Positions 1-19 are cleaved as a signal peptide; that stretch reads MEKLIILLLVAAVLMSTQA. The propeptide occupies 20 to 44; the sequence is LFQEKRTMKKIDFLSKGKADAEKQR. 3 cysteine pairs are disulfide-bonded: cysteine 48-cysteine 62, cysteine 55-cysteine 66, and cysteine 61-cysteine 70. Residue glutamate 56 is modified to 4-carboxyglutamate. Residue proline 58 is modified to 4-hydroxyproline. Residue serine 71 is modified to Serine amide.

Brominated at one of the Trp residues. Expressed by the venom duct.

Its subcellular location is the secreted. This chain is Conotoxin Gla(2)-TxVI/B, found in Conus textile (Cloth-of-gold cone).